Reading from the N-terminus, the 111-residue chain is UPF0339 protein ACIAD0721 (111 aa).

2 consecutive repeat copies span residues 10–58 and 61–109. The segment at 89–111 is disordered; it reads SRDKGIESVKNNGTTATVKDLTG.

Belongs to the UPF0339 family. Duplicated subfamily.

The polypeptide is UPF0339 protein ACIAD0721 (Acinetobacter baylyi (strain ATCC 33305 / BD413 / ADP1)).